Consider the following 515-residue polypeptide: Synaptic vesicular amine transporter (515 aa).

Topologically, residues 1–20 are cytoplasmic; that stretch reads MALSDLVLLRWLRDSRHSRK. A helical transmembrane segment spans residues 21–41; it reads LILFIVFLALLLDNMLLTVVV. The Lumenal, vesicle segment spans residues 42-130; it reads PIIPSYLYSI…EDRDLLNENV (89 aa). Residues Asn56, Asn80, Asn81, Asn89, and Asn111 are each glycosylated (N-linked (GlcNAc...) asparagine). Cysteines 118 and 325 form a disulfide. Residues 131-151 traverse the membrane as a helical segment; it reads QVGLLFASKATVQLLTNPFIG. The Cytoplasmic portion of the chain corresponds to 152–160; it reads LLTNRIGYP. Residues 161 to 181 form a helical membrane-spanning segment; sequence IPMFAGFCIMFISTVMFAFSS. Topologically, residues 182 to 190 are lumenal, vesicle; it reads SYAFLLIAR. A helical transmembrane segment spans residues 191-211; the sequence is SLQGIGSSCSSVAGMGMLASV. Topologically, residues 212–220 are cytoplasmic; sequence YTDDEERGK. The chain crosses the membrane as a helical span at residues 221 to 243; it reads PMGIALGGLAMGVLVGPPFGSVL. Serotonin contacts are provided by Leu229 and Val233. Residues 244–249 lie on the Lumenal, vesicle side of the membrane; it reads YEFVGK. A helical membrane pass occupies residues 250-272; sequence TAPFLVLAALVLLDGAIQLFVLQ. Over 273 to 292 the chain is Cytoplasmic; sequence PSRVQPESQKGTPLTTLLKD. The chain crosses the membrane as a helical span at residues 293–312; sequence PYILIAAGSICFANMGIAML. Positions 306, 309, 313, 335, and 342 each coordinate serotonin. Topologically, residues 313 to 329 are lumenal, vesicle; that stretch reads EPALPIWMMETMCSRKW. Residues 330-353 form a helical membrane-spanning segment; the sequence is QLGVAFLPASISYLIGTNIFGILA. Residues 354–358 lie on the Cytoplasmic side of the membrane; that stretch reads HKMGR. Residues 359–379 form a helical membrane-spanning segment; that stretch reads WLCALLGMVIVGISILCIPFA. The Lumenal, vesicle segment spans residues 380 to 390; that stretch reads KNIYGLIAPNF. The helical transmembrane segment at 391 to 411 threads the bilayer; it reads GVGFAIGMVDSSMMPIMGYLV. Serotonin is bound at residue Asp400. Residues 412 to 415 are Cytoplasmic-facing; the sequence is DLRH. The chain crosses the membrane as a helical span at residues 416 to 436; the sequence is VSVYGSVYAIADVAFCMGYAI. Position 434 (Tyr434) interacts with serotonin. Residues 437–441 are Lumenal, vesicle-facing; it reads GPSAG. Residues 442–463 form a helical membrane-spanning segment; the sequence is GAIAKAIGFPWLMTIIGIIDIA. Residues 464–515 are Cytoplasmic-facing; sequence FAPLCFFLRSPPAKEEKMAILMDHNCPIKRKMYTQNNVQSYPIGDDEESESD. A phosphoserine; by CK2 mark is found at Ser512 and Ser514.

It belongs to the major facilitator superfamily. Vesicular transporter family. In terms of assembly, interacts with SLC6A3. In terms of tissue distribution, expressed in the substantia nigra and the tuberomammillary nucleus of the posterior hypothalamus. Expressed in stomach, in particular in varicose nerve fibers and enterochromaffin-like cells in the corpus region (at protein level).

The protein localises to the cytoplasmic vesicle. Its subcellular location is the secretory vesicle. The protein resides in the synaptic vesicle membrane. It is found in the secretory vesicle membrane. It localises to the cell projection. The protein localises to the axon. Its subcellular location is the dendrite. The catalysed reaction is serotonin(in) + 2 H(+)(out) = serotonin(out) + 2 H(+)(in). It carries out the reaction dopamine(in) + 2 H(+)(out) = dopamine(out) + 2 H(+)(in). It catalyses the reaction histamine(in) + 2 H(+)(out) = histamine(out) + 2 H(+)(in). Strongly inhibited by reserpine and tetrabenazine. Also inhibited to a lesser extent by ketanserin and fenfluramine. Reserpine and ketanserin inhibit by blocking the substrate-binding pocket. Tetrabenazine traps SLC18A2/VMAT2 in an occluded conformation and its inhibition is specific to SLC18A2/VMAT2 but not SLC18A1/VMAT1. Its function is as follows. Electrogenic antiporter that exchanges one cationic monoamine with two intravesicular protons across the membrane of secretory and synaptic vesicles. Uses the electrochemical proton gradient established by the V-type proton-pump ATPase to accumulate high concentrations of monoamines inside the vesicles prior to their release via exocytosis. Transports a variety of catecholamines such as dopamine, adrenaline and noradrenaline, histamine, and indolamines such as serotonin. Regulates the transvesicular monoaminergic gradient that determines the quantal size. Mediates somatodendritic dopamine release in hippocampal neurons, likely as part of a regulated secretory pathway that integrates retrograde synaptic signals. Acts as a primary transporter for striatal dopamine loading ensuring impulse-dependent release of dopamine at the synaptic cleft. Responsible for histamine and serotonin storage and subsequent corelease from mast cell granules. In Rattus norvegicus (Rat), this protein is Synaptic vesicular amine transporter (Slc18a2).